The primary structure comprises 593 residues: Serine/threonine-protein kinase SSN3 (593 aa).

The Protein kinase domain maps to 90–489; that stretch reads YEIIGYIAAG…AIDALDHVYF (400 aa). Residue 96 to 104 coordinates ATP; sequence IAAGTYGKV. The segment at 161–199 is disordered; that stretch reads KPSHKRFTPPNNSNSTQIRSNSGSETNVRINSSSITNNS. Polar residues predominate over residues 169-185; the sequence is PPNNSNSTQIRSNSGSE. Over residues 186–199 the composition is skewed to low complexity; the sequence is TNVRINSSSITNNS. Lys-211 provides a ligand contact to ATP. Catalysis depends on Asp-312, which acts as the Proton acceptor. 2 disordered regions span residues 517-551 and 569-593; these read DNDI…NMNG and AAVS…KKRK. The span at 518 to 536 shows a compositional bias: polar residues; sequence NDITNVGNDNNQANHSQKQ. The span at 540 to 551 shows a compositional bias: low complexity; the sequence is GNNNNKNGNMNG. Over residues 573–585 the composition is skewed to polar residues; it reads GNGNNPTSNTATG.

This sequence belongs to the protein kinase superfamily. CMGC Ser/Thr protein kinase family. CDC2/CDKX subfamily. Component of the SRB8-11 complex, a regulatory module of the Mediator complex. Mg(2+) is required as a cofactor.

It is found in the nucleus. The catalysed reaction is L-seryl-[protein] + ATP = O-phospho-L-seryl-[protein] + ADP + H(+). It carries out the reaction L-threonyl-[protein] + ATP = O-phospho-L-threonyl-[protein] + ADP + H(+). The enzyme catalyses [DNA-directed RNA polymerase] + ATP = phospho-[DNA-directed RNA polymerase] + ADP + H(+). In terms of biological role, component of the SRB8-11 complex. The SRB8-11 complex is a regulatory module of the Mediator complex which is itself involved in regulation of basal and activated RNA polymerase II-dependent transcription. The SRB8-11 complex may be involved in the transcriptional repression of a subset of genes regulated by Mediator. It may inhibit the association of the Mediator complex with RNA polymerase II to form the holoenzyme complex. The SRB8-11 complex phosphorylates the C-terminal domain (CTD) of the largest subunit of RNA polymerase II. This is Serine/threonine-protein kinase SSN3 (SSN3) from Kluyveromyces lactis (strain ATCC 8585 / CBS 2359 / DSM 70799 / NBRC 1267 / NRRL Y-1140 / WM37) (Yeast).